Reading from the N-terminus, the 1611-residue chain is Non-structural polyprotein 1AB (1611 aa).

The stretch at 124-187 (TTSNLIARAM…ELHLLKELGK (64 aa)) forms a coiled coil. The next 7 membrane-spanning stretches (helical) occupy residues 195 to 215 (AFSF…LHYT), 329 to 348 (ISYY…ALAT), 353 to 373 (MVMV…PITV), 375 to 395 (IASV…LVFP), 397 to 417 (FLPY…FFSS), 426 to 446 (VSTA…VIVL), and 450 to 470 (SIPM…SVGV). Catalysis depends on charge relay system; for serine protease activity residues H550, D582, and S647. Y833 carries the O-(5'-phospho-RNA)-tyrosine modification. The RdRp catalytic domain maps to 1352 to 1486 (RYYVELDWTR…AVDKRFINSY (135 aa)).

The protein belongs to the astroviridae polyprotein 1AB family. Monomer. In terms of processing, cleaved by the viral and host proteases. The protease is probably autocatalytically cleaved.

The protein localises to the host membrane. The catalysed reaction is RNA(n) + a ribonucleoside 5'-triphosphate = RNA(n+1) + diphosphate. In terms of biological role, responsible for the cleavage of the polyprotein into functional products. Protein covalently attached to the 5' extremity of the genomic and subgenomic RNAs. It may serve as a primer for the replicase. The chain is Non-structural polyprotein 1AB (ORF1) from Turkey astrovirus 1 (TAstV-1).